The following is a 492-amino-acid chain: Cytochrome P450 2B19 (492 aa).

A Phosphoserine; by PKA modification is found at Ser-129. Position 437 (Cys-437) interacts with heme.

The protein belongs to the cytochrome P450 family. Heme is required as a cofactor. Expressed only in differentiated keratinocytes in skin.

The protein localises to the endoplasmic reticulum membrane. Its subcellular location is the microsome membrane. It carries out the reaction an organic molecule + reduced [NADPH--hemoprotein reductase] + O2 = an alcohol + oxidized [NADPH--hemoprotein reductase] + H2O + H(+). Cytochromes P450 are a group of heme-thiolate monooxygenases. In liver microsomes, this enzyme is involved in an NADPH-dependent electron transport pathway. It oxidizes a variety of structurally unrelated compounds, including steroids, fatty acids, and xenobiotics. This Mus musculus (Mouse) protein is Cytochrome P450 2B19 (Cyp2b19).